Here is a 161-residue protein sequence, read N- to C-terminus: 2-C-methyl-D-erythritol 2,4-cyclodiphosphate synthase (161 aa).

Positions 8 and 10 each coordinate a divalent metal cation. Residues 8-10 and 34-35 contribute to the 4-CDP-2-C-methyl-D-erythritol 2-phosphate site; these read DLH and HS. An a divalent metal cation-binding site is contributed by His-42. Residues 56–58 and Arg-142 each bind 4-CDP-2-C-methyl-D-erythritol 2-phosphate; that span reads DIG.

It belongs to the IspF family. In terms of assembly, homotrimer. A divalent metal cation is required as a cofactor.

It carries out the reaction 4-CDP-2-C-methyl-D-erythritol 2-phosphate = 2-C-methyl-D-erythritol 2,4-cyclic diphosphate + CMP. It functions in the pathway isoprenoid biosynthesis; isopentenyl diphosphate biosynthesis via DXP pathway; isopentenyl diphosphate from 1-deoxy-D-xylulose 5-phosphate: step 4/6. Involved in the biosynthesis of isopentenyl diphosphate (IPP) and dimethylallyl diphosphate (DMAPP), two major building blocks of isoprenoid compounds. Catalyzes the conversion of 4-diphosphocytidyl-2-C-methyl-D-erythritol 2-phosphate (CDP-ME2P) to 2-C-methyl-D-erythritol 2,4-cyclodiphosphate (ME-CPP) with a corresponding release of cytidine 5-monophosphate (CMP). The sequence is that of 2-C-methyl-D-erythritol 2,4-cyclodiphosphate synthase from Treponema denticola (strain ATCC 35405 / DSM 14222 / CIP 103919 / JCM 8153 / KCTC 15104).